A 306-amino-acid chain; its full sequence is Secretory carrier-associated membrane protein 1 (306 aa).

The tract at residues 1–66 (MAGRYDSNPF…LPPEPAAFGA (66 aa)) is disordered. Topologically, residues 1-141 (MAGRYDSNPF…EIPSHLQRMQ (141 aa)) are cytoplasmic. A compositionally biased stretch (gly residues) spans 25-36 (KAGGQPSYGGGA). Over residues 40–55 (PNPRNVPSVSSNSRLS) the composition is skewed to low complexity. A coiled-coil region spans residues 72–109 (LDSSKDLKNREKELQAREAELNKREKELKRREEAAARA). 4 helical membrane-spanning segments follow: residues 142 to 162 (YVAF…VIAV), 174 to 194 (IWLL…VLWY), 209 to 229 (FGLF…SAVA), and 257 to 277 (IFYF…IWVI). The Cytoplasmic portion of the chain corresponds to 278–306 (QQVYMYFRGSGKAAEMKRDATRGAMRAAF).

This sequence belongs to the SCAMP family.

It localises to the cell membrane. Its subcellular location is the cytoplasmic vesicle. The protein resides in the secretory vesicle membrane. Probably involved in membrane trafficking. In Oryza sativa subsp. japonica (Rice), this protein is Secretory carrier-associated membrane protein 1 (SCAMP1).